The primary structure comprises 360 residues: NAD(P)H-quinone oxidoreductase subunit 1, chloroplastic (360 aa).

Transmembrane regions (helical) follow at residues 27–47, 98–118, 129–149, 165–185, 203–223, 253–273, 297–317, and 340–360; these read IWIF…VLVI, FSIG…IIPF, IGIF…LMSG, AAQS…ISLL, FWGW…ISSL, FGLF…FVTV, IFGT…FLFI, and FLLP…LFSL.

It belongs to the complex I subunit 1 family. As to quaternary structure, NDH is composed of at least 16 different subunits, 5 of which are encoded in the nucleus.

It localises to the plastid. It is found in the chloroplast thylakoid membrane. The enzyme catalyses a plastoquinone + NADH + (n+1) H(+)(in) = a plastoquinol + NAD(+) + n H(+)(out). The catalysed reaction is a plastoquinone + NADPH + (n+1) H(+)(in) = a plastoquinol + NADP(+) + n H(+)(out). In terms of biological role, NDH shuttles electrons from NAD(P)H:plastoquinone, via FMN and iron-sulfur (Fe-S) centers, to quinones in the photosynthetic chain and possibly in a chloroplast respiratory chain. The immediate electron acceptor for the enzyme in this species is believed to be plastoquinone. Couples the redox reaction to proton translocation, and thus conserves the redox energy in a proton gradient. The sequence is that of NAD(P)H-quinone oxidoreductase subunit 1, chloroplastic from Lobularia maritima (Sweet alyssum).